The chain runs to 71 residues: Conotoxin Tx11.3 (71 aa).

Residues 1-19 (MKLCVTFLLVLVILPSVTG) form the signal peptide. A propeptide spanning residues 20-47 (VKSSERTLSGAALRGDRGTCSGRGQECK) is cleaved from the precursor. Disulfide bonds link Cys39-Cys53, Cys46-Cys58, Cys52-Cys63, and Cys57-Cys70.

The protein belongs to the I1 superfamily. In terms of tissue distribution, expressed by the venom duct.

It localises to the secreted. The protein is Conotoxin Tx11.3 of Conus textile (Cloth-of-gold cone).